The following is a 275-amino-acid chain: Hydroxyethylthiazole kinase (275 aa).

Met-50 lines the substrate pocket. 2 residues coordinate ATP: Arg-126 and Ser-171. Ala-200 is a binding site for substrate.

It belongs to the Thz kinase family. Requires Mg(2+) as cofactor.

The catalysed reaction is 5-(2-hydroxyethyl)-4-methylthiazole + ATP = 4-methyl-5-(2-phosphooxyethyl)-thiazole + ADP + H(+). Its pathway is cofactor biosynthesis; thiamine diphosphate biosynthesis; 4-methyl-5-(2-phosphoethyl)-thiazole from 5-(2-hydroxyethyl)-4-methylthiazole: step 1/1. Catalyzes the phosphorylation of the hydroxyl group of 4-methyl-5-beta-hydroxyethylthiazole (THZ). This chain is Hydroxyethylthiazole kinase, found in Acinetobacter baumannii (strain ACICU).